Here is a 177-residue protein sequence, read N- to C-terminus: Thymidine kinase (177 aa).

Gly11–Ser18 provides a ligand contact to ATP. Catalysis depends on Glu83, which acts as the Proton acceptor. Phe113 contacts substrate. Residues Cys138 and Cys141 each contribute to the Zn(2+) site. Ile157–Gly161 contacts substrate. Zn(2+) contacts are provided by Cys170 and Cys173.

This sequence belongs to the thymidine kinase family. As to quaternary structure, homotetramer. Two molecules of substrate bind to each enzyme tetramer.

The enzyme catalyses thymidine + ATP = dTMP + ADP + H(+). Its function is as follows. Phosphorylates thymidine and thymidine analogs, such as azidothymidine (AZT). Part of the salvage pathway for pyrimidine deoxyribonucleotide synthesis. This chain is Thymidine kinase (OPG101), found in Variola virus (isolate Human/India/Ind3/1967) (VARV).